We begin with the raw amino-acid sequence, 264 residues long: Cyclin-P1-1 (264 aa).

The tract at residues 1 to 25 (MDAAAAAGGEMSRQKATASAPPPPE) is disordered.

This sequence belongs to the cyclin family. Cyclin U/P subfamily.

The chain is Cyclin-P1-1 (CYCP1-1) from Oryza sativa subsp. japonica (Rice).